The following is a 217-amino-acid chain: Ribulose-phosphate 3-epimerase (217 aa).

Ser-6 provides a ligand contact to substrate. His-29, Asp-31, and His-62 together coordinate a divalent metal cation. The Proton acceptor role is filled by Asp-31. Substrate contacts are provided by residues His-62, Gly-138–Gly-141, Asp-171–Gly-173, and Gly-193–Ser-194. Residue Asp-171 coordinates a divalent metal cation. Catalysis depends on Asp-171, which acts as the Proton donor.

This sequence belongs to the ribulose-phosphate 3-epimerase family. A divalent metal cation is required as a cofactor.

It carries out the reaction D-ribulose 5-phosphate = D-xylulose 5-phosphate. It participates in carbohydrate degradation. Functionally, catalyzes the reversible epimerization of D-ribulose 5-phosphate to D-xylulose 5-phosphate. This is Ribulose-phosphate 3-epimerase from Helicobacter pylori (strain ATCC 700392 / 26695) (Campylobacter pylori).